The sequence spans 146 residues: Probable glycine cleavage system H protein 1, mitochondrial (146 aa).

Residues 1-30 (MLKTLRFGTRAFGQNLNIAKRNFCTRYTND) constitute a mitochondrion transit peptide. A Lipoyl-binding domain is found at 41 to 123 (NYRLGITDFA…MGDGWIVEYK (83 aa)). Position 82 is an N6-lipoyllysine (lysine 82).

This sequence belongs to the GcvH family. The glycine cleavage system is composed of four proteins: P, T, L and H. The cofactor is (R)-lipoate.

The protein localises to the mitochondrion. Functionally, the glycine cleavage system catalyzes the degradation of glycine. The H protein shuttles the methylamine group of glycine from the P protein to the T protein. The sequence is that of Probable glycine cleavage system H protein 1, mitochondrial (gcvH1) from Dictyostelium discoideum (Social amoeba).